Here is a 992-residue protein sequence, read N- to C-terminus: Disks large-associated protein 1 (992 aa).

Disordered regions lie at residues 150-209 (TKSH…SWWS) and 355-376 (KAMGDEDSGDSDTSPKPSPKVA). Phosphoserine is present on Ser169. Positions 194-209 (RSNASNASPTSPSWWS) are enriched in low complexity. Phosphoserine occurs at positions 362, 365, 368, 372, 389, 418, 421, 425, 428, 437, 509, 516, and 578. Thr579 carries the phosphothreonine modification. Ser581 and Ser605 each carry phosphoserine. Phosphothreonine is present on Thr606. Phosphoserine is present on residues Ser608 and Ser611. Interaction with DYL2 stretches follow at residues 665-676 (LSIGIQVDDAEE) and 687-698 (NKFQSVGVQVEE). The interval 914 to 980 (WKQMDPLDKK…QNSATESAES (67 aa)) is disordered. Basic and acidic residues-rich tracts occupy residues 918 to 927 (DPLDKKERRA) and 943 to 958 (IRERSLESSQRQEARK). The residue at position 947 (Ser947) is a Phosphoserine. Residues 969–978 (VRQNSATESA) are compositionally biased toward polar residues. Residues 990–992 (TRL) carry the PDZ-binding motif.

Belongs to the SAPAP family. In terms of assembly, interacts with the guanylate kinase-like domain of DLG1, DLG2, DLG3, DLG4 and AIP1. Interacts with the PDZ domain of SHANK1, SHANK2 and SHANK3. Found in a complex with DLG4 and SHANK1, SHANK2 or SHANK3. Found in a complex with DLG4 and BEGAIN. Interacts with DYL2 and LRFN1. Interacts with MPP2 (via the SH3-Guanylate kinase-like sub-module). In terms of processing, ubiquitinated by TRIM3; leading to proteasomal degradation. As to expression, highest levels in the neocortex, part of the hippocampus, the granule cell layer of the cerebellum, the glomerular layer of the olfactory bulb, the inner plexiform layer of the retina, the ventral and dorsal horn of the spinal cord, the neuromuscular junction and the submandibular ganglion.

It localises to the cell membrane. It is found in the postsynaptic density. The protein localises to the synapse. Its function is as follows. Part of the postsynaptic scaffold in neuronal cells. This Mus musculus (Mouse) protein is Disks large-associated protein 1 (Dlgap1).